The sequence spans 316 residues: tRNA-cytidine(32) 2-sulfurtransferase (316 aa).

The short motif at 58–63 (SGGKDS) is the PP-loop motif element. [4Fe-4S] cluster-binding residues include Cys-133, Cys-136, and Cys-224.

It belongs to the TtcA family. Homodimer. It depends on Mg(2+) as a cofactor. [4Fe-4S] cluster is required as a cofactor.

The protein localises to the cytoplasm. The enzyme catalyses cytidine(32) in tRNA + S-sulfanyl-L-cysteinyl-[cysteine desulfurase] + AH2 + ATP = 2-thiocytidine(32) in tRNA + L-cysteinyl-[cysteine desulfurase] + A + AMP + diphosphate + H(+). It participates in tRNA modification. In terms of biological role, catalyzes the ATP-dependent 2-thiolation of cytidine in position 32 of tRNA, to form 2-thiocytidine (s(2)C32). The sulfur atoms are provided by the cysteine/cysteine desulfurase (IscS) system. In Aromatoleum aromaticum (strain DSM 19018 / LMG 30748 / EbN1) (Azoarcus sp. (strain EbN1)), this protein is tRNA-cytidine(32) 2-sulfurtransferase.